Reading from the N-terminus, the 480-residue chain is MNAVTKITPHADYKIADISLADWGRKELDIAEHEMPGLMSIRRKHAQTTPLKDVRITGSLHMTIQTAVLIETLKDIGANVRWASCNIFSTQDHAAAAIAATGTPVFAWKGETLEEYWDCTLDALTFTLPDGTLTGPELVVDDGGDVTLLIHKGYELENGSTWVDEPASSHEESVIKALLKRVAVERPGYWARVVKDWKGVSEETTTGVHRLYQIAEAGKLLIPAINVNDSVTKSKFDNLYGCRESLADGLKRAMDVMLAGKVAVVCGYGDVGKGSAASLRAYGARVVVTEIDPICALQASMEGFEVNTIESTLGRADIYVTTTGNKDIITVEHLQAMKDQAIVCNIGHFDNEIQVDALKALKDVQKINIKPQVDKYVFPNGNAIFLLADGRLVNLGCATGHPSFVMSNSFANQTLAQIDLWEKRDTYEKKVYILPKHLDEEVARLHLEKIGVKLTTLTKDQADYLGVDVAGPYKPDHYRY.

Threonine 63, aspartate 142, and glutamate 203 together coordinate substrate. 204-206 (TTT) is a binding site for NAD(+). Substrate-binding residues include lysine 233 and aspartate 237. NAD(+) contacts are provided by residues asparagine 238, 267–272 (GYGDVG), glutamate 290, asparagine 325, 346–348 (IGH), and asparagine 394.

The protein belongs to the adenosylhomocysteinase family. It depends on NAD(+) as a cofactor.

The protein resides in the cytoplasm. The enzyme catalyses S-adenosyl-L-homocysteine + H2O = L-homocysteine + adenosine. It participates in amino-acid biosynthesis; L-homocysteine biosynthesis; L-homocysteine from S-adenosyl-L-homocysteine: step 1/1. In terms of biological role, may play a key role in the regulation of the intracellular concentration of adenosylhomocysteine. This is Adenosylhomocysteinase from Xanthomonas oryzae pv. oryzae (strain PXO99A).